A 271-amino-acid polypeptide reads, in one-letter code: MSNTKEILEKYNIKLDTNKSQNYLIDDNKLNIILENADIQDNETILEIGAGIGTLTLPMAKKAKKVIAIEKDPIIVDILKQQIIKEKLTNIEIIKDDALKVDFPKFDKVVSNLPYQISSPVTFKLLEYPFKKAILMYQLEFAKRMQAKPDTHEYSRLSVALSYRADTKIIDTLPPEAFIPKPKIKSAVIELIPKNNKPIDKLLDNTIRALFQHRNKKAKKALIQSAHELGVDKKVLKQKLSNVTNDLFEEKVFKLTPTQIKEISLILEGNL.

S-adenosyl-L-methionine is bound by residues asparagine 22, leucine 24, glycine 49, glutamate 70, aspartate 97, and asparagine 112.

The protein belongs to the class I-like SAM-binding methyltransferase superfamily. rRNA adenine N(6)-methyltransferase family. RsmA subfamily.

It is found in the cytoplasm. In terms of biological role, specifically dimethylates two adjacent adenosines in the loop of a conserved hairpin near the 3'-end of 16S rRNA in the 30S particle. May play a critical role in biogenesis of 30S subunits. This Methanosphaera stadtmanae (strain ATCC 43021 / DSM 3091 / JCM 11832 / MCB-3) protein is Probable ribosomal RNA small subunit methyltransferase A.